The chain runs to 387 residues: Probable serine/threonine-protein kinase RIO1 homolog (387 aa).

Residues 41 to 387 enclose the Protein kinase domain; the sequence is VNLQGSLCTG…RYIGMKKRKN (347 aa). ATP is bound at residue Lys91. Asp204 acts as the Proton acceptor in catalysis. Asn209 and Asp221 together coordinate Mg(2+). Asp221 serves as the catalytic 4-aspartylphosphate intermediate. Residues 309–372 form a disordered region; that stretch reads EFGSTTDSDL…RASRISKKEK (64 aa). A compositionally biased stretch (low complexity) spans 312-321; it reads STTDSDLSST. Over residues 361 to 372 the composition is skewed to basic residues; it reads IRRASRISKKEK.

It belongs to the protein kinase superfamily. RIO-type Ser/Thr kinase family. It depends on Mg(2+) as a cofactor.

It localises to the cytoplasm. It carries out the reaction L-seryl-[protein] + ATP = O-phospho-L-seryl-[protein] + ADP + H(+). The enzyme catalyses L-threonyl-[protein] + ATP = O-phospho-L-threonyl-[protein] + ADP + H(+). The catalysed reaction is ATP + H2O = ADP + phosphate + H(+). Functionally, required for the final endonucleolytic cleavage at site D converting 20S pre-rRNA into the mature 18S rRNA. Required for the final steps of cytoplasmic maturation of the 40S ribosomal subunit. Despite the protein kinase domain is proposed to act predominantly as an ATPase. Has a role in the cell cycle where it is required for entrance into S-phase and in the control of the onset of anaphase. Appears to also be involved in the maintenance of chromosome stability and correct mitotic segregation. In Encephalitozoon cuniculi (strain GB-M1) (Microsporidian parasite), this protein is Probable serine/threonine-protein kinase RIO1 homolog (RIO1).